The chain runs to 219 residues: UPF0502 protein Gura_0277 (219 aa).

Belongs to the UPF0502 family.

The protein is UPF0502 protein Gura_0277 of Geotalea uraniireducens (strain Rf4) (Geobacter uraniireducens).